Reading from the N-terminus, the 196-residue chain is 7-methyl-GTP pyrophosphatase (196 aa).

The active-site Proton acceptor is Asp72.

This sequence belongs to the Maf family. YceF subfamily. It depends on a divalent metal cation as a cofactor.

It localises to the cytoplasm. It catalyses the reaction N(7)-methyl-GTP + H2O = N(7)-methyl-GMP + diphosphate + H(+). Functionally, nucleoside triphosphate pyrophosphatase that hydrolyzes 7-methyl-GTP (m(7)GTP). May have a dual role in cell division arrest and in preventing the incorporation of modified nucleotides into cellular nucleic acids. The sequence is that of 7-methyl-GTP pyrophosphatase from Neisseria meningitidis serogroup B (strain ATCC BAA-335 / MC58).